The primary structure comprises 1006 residues: Transcription factor tau subunit sfc4 (1006 aa).

The tract at residues 64 to 91 is disordered; sequence GLWSDEESDYEGSDDESNFSKTASRTED. Residues 66–80 are compositionally biased toward acidic residues; sequence WSDEESDYEGSDDES. TPR repeat units lie at residues 133 to 166, 205 to 238, 277 to 310, 396 to 429, 431 to 464, and 466 to 499; these read QQML…DNNV, HELW…KPPN, ASIL…FYQY, HLFR…PPDY, WGML…EPAQ, and IGLW…DNSN. Residues 506-554 adopt a coiled-coil conformation; sequence LAEINELQDNRDAALEIVTNIFEQRRNINELEREQSQNEDHEKNVGSQL. 2 TPR repeats span residues 841-874 and 924-957; these read PVLV…NPDC and QEAL…SPMS.

In terms of assembly, component of the TFIIIC complex including sfc1, sfc3, sfc4, sfc6 and sfc7. The subunits are organized in two globular domains, tauA and tauB, connected by a proteolysis-sensitive and flexible linker. Interacts with sfc1, sfc3 and sfc6. Post-translationally, phosphorylated.

Its subcellular location is the nucleus. In terms of biological role, TFIIIC mediates tRNA and 5S RNA gene activation by binding to intragenic promoter elements. Upstream of the transcription start site, TFIIIC assembles the initiation complex TFIIIB-TFIIIC-tDNA, which is sufficient for RNA polymerase III recruitment and function. Part of the tauA domain of TFIIIC that binds boxA DNA promoter sites of tRNA and similar genes. Sfc4 is the TFIIIB assembling subunit of TFIIIC. This is Transcription factor tau subunit sfc4 from Schizosaccharomyces pombe (strain 972 / ATCC 24843) (Fission yeast).